The chain runs to 323 residues: Probable oxidoreductase patJ (323 aa).

Residues 291–323 (DQSANGVNGHATGVEAKKKQLGDMTRRRSGAQE) form a disordered region. A compositionally biased stretch (basic and acidic residues) spans 305 to 316 (EAKKKQLGDMTR).

It belongs to the oxidoreductase OpS7 family.

The protein resides in the vacuole lumen. The protein localises to the cytoplasmic vesicle lumen. The protein operates within mycotoxin biosynthesis; patulin biosynthesis. In terms of biological role, probable oxidoreductase; part of the gene cluster that mediates the biosynthesis of patulin, an acetate-derived tetraketide mycotoxin produced by several fungal species that shows antimicrobial properties against several bacteria. PatJ acts with patO in the vacuole to convert gentisyl alcohol to isoepoxydon. The pathway begins with the synthesis of 6-methylsalicylic acid by the polyketide synthase (PKS) patK via condensation of acetate and malonate units. The 6-methylsalicylic acid decarboxylase patG then catalyzes the decarboxylation of 6-methylsalicylic acid to yield m-cresol (also known as 3-methylphenol). These first reactions occur in the cytosol. The intermediate m-cresol is then transported into the endoplasmic reticulum where the cytochrome P450 monooxygenase patH converts it to m-hydroxybenzyl alcohol, which is further converted to gentisyl alcohol by the cytochrome P450 monooxygenase patI. The oxidoreductases patJ and patO further convert gentisyl alcohol to isoepoxydon in the vacuole. PatN catalyzes then the transformation of isoepoxydon into phyllostine. The cluster protein patF is responsible for the conversion from phyllostine to neopatulin whereas the alcohol dehydrogenase patD converts neopatulin to E-ascladiol. The steps between isoepoxydon and E-ascladiol occur in the cytosol, and E-ascladiol is probably secreted to the extracellular space by one of the cluster-specific transporters patC or patM. Finally, the secreted patulin synthase patE catalyzes the conversion of E-ascladiol to patulin. The protein is Probable oxidoreductase patJ of Aspergillus clavatus (strain ATCC 1007 / CBS 513.65 / DSM 816 / NCTC 3887 / NRRL 1 / QM 1276 / 107).